The chain runs to 88 residues: Acyl-CoA-binding domain-containing protein 7 (88 aa).

Positions 3-88 constitute an ACB domain; it reads LQADFDRAAE…AKELIEKYGI (86 aa). An acyl-CoA-binding positions include Arg15, 30 to 34, Lys56, and Tyr75; that span reads YGLYK.

It belongs to the ACBD7 family.

Functionally, binds medium- and long-chain acyl-CoA esters. The protein is Acyl-CoA-binding domain-containing protein 7 (ACBD7) of Homo sapiens (Human).